Reading from the N-terminus, the 930-residue chain is GPI ethanolamine phosphate transferase 1 (930 aa).

Over 1–8 (MARLGRTG) the chain is Cytoplasmic. A helical membrane pass occupies residues 9–29 (FLTLAVVFHLIYAYSIFDIYF). At 30–466 (VSPIVSGMRP…LQTYDWLFLR (437 aa)) the chain is on the lumenal side. N-linked (GlcNAc...) asparagine glycosylation is present at N148. A helical transmembrane segment spans residues 467–487 (TIVTFGYVGWIAYALTTVIHL). The Cytoplasmic segment spans residues 488–498 (HVLHGASESDR). A helical transmembrane segment spans residues 499 to 519 (TTASISFFSSVLVALFSVFLY). Topologically, residues 520–521 (QG) are lumenal. The chain crosses the membrane as a helical span at residues 522–542 (SPWRYYLYGFFPIFFWEEVFA). Residues 543 to 569 (RRKAFHAGRAGALLLPKRDLHSNKVED) lie on the Cytoplasmic side of the membrane. A helical transmembrane segment spans residues 570–590 (IDTITYGGAFMLLTGLLYLLF). At 591 to 611 (EDEILGTSHQPAAVSRKGSRN) the chain is on the lumenal side. The helical transmembrane segment at 612–632 (IMGLQLGMVLLALIVTRSSAA) threads the bilayer. The Cytoplasmic portion of the chain corresponds to 633–639 (SLQAKQG). A helical transmembrane segment spans residues 640–660 (LPFGNQVVGWGVLIASLLLPF). The Lumenal portion of the chain corresponds to 661-684 (AHRLYPNSHYLHRLMIIFLTFSPT). Residues 685-705 (FIILTISYEGLFYFAFCMTLV) form a helical membrane-spanning segment. Topologically, residues 706 to 761 (TWVRLEHATYVYTAKPVAKQAQETIEPPKKANPGATTVVDGETYRFRTLTVSDARV) are cytoplasmic. Residues 762-782 (ALFFFFLLQSAFFSTGNIASI) form a helical membrane-spanning segment. Topologically, residues 783–803 (SSFSLDSVYRLIPVFNPFSQG) are lumenal. The chain crosses the membrane as a helical span at residues 804-824 (ALLILKLLIPFAIISANLGIL). Over 825-833 (NRRLEVAPS) the chain is Cytoplasmic. Residues 834-854 (ALFMVVMAISDVMTLNFFYMV) form a helical membrane-spanning segment. The Lumenal segment spans residues 855–870 (RDEGSWLDIGTTISHF). The helical transmembrane segment at 871 to 891 (CIASFLCTFVAGLEFLSEVFI) threads the bilayer. Over 892-930 (SGVDFGLRTDAITASVPDIVNGITSKGQKDVPNGVEDKE) the chain is Cytoplasmic.

Belongs to the PIGG/PIGN/PIGO family. PIGN subfamily.

The protein resides in the endoplasmic reticulum membrane. It participates in glycolipid biosynthesis; glycosylphosphatidylinositol-anchor biosynthesis. In terms of biological role, ethanolamine phosphate transferase involved in glycosylphosphatidylinositol-anchor biosynthesis. Transfers ethanolamine phosphate to the first alpha-1,4-linked mannose of the glycosylphosphatidylinositol precursor of GPI-anchor. This chain is GPI ethanolamine phosphate transferase 1 (mcd4), found in Emericella nidulans (strain FGSC A4 / ATCC 38163 / CBS 112.46 / NRRL 194 / M139) (Aspergillus nidulans).